The primary structure comprises 511 residues: Bifunctional purine biosynthesis protein PurH (511 aa).

The region spanning 1–145 is the MGS-like domain; it reads MKKRALVSVS…KNHKFVSVIV (145 aa).

This sequence belongs to the PurH family.

The enzyme catalyses (6R)-10-formyltetrahydrofolate + 5-amino-1-(5-phospho-beta-D-ribosyl)imidazole-4-carboxamide = 5-formamido-1-(5-phospho-D-ribosyl)imidazole-4-carboxamide + (6S)-5,6,7,8-tetrahydrofolate. It carries out the reaction IMP + H2O = 5-formamido-1-(5-phospho-D-ribosyl)imidazole-4-carboxamide. Its pathway is purine metabolism; IMP biosynthesis via de novo pathway; 5-formamido-1-(5-phospho-D-ribosyl)imidazole-4-carboxamide from 5-amino-1-(5-phospho-D-ribosyl)imidazole-4-carboxamide (10-formyl THF route): step 1/1. It functions in the pathway purine metabolism; IMP biosynthesis via de novo pathway; IMP from 5-formamido-1-(5-phospho-D-ribosyl)imidazole-4-carboxamide: step 1/1. In Bacillus cereus (strain B4264), this protein is Bifunctional purine biosynthesis protein PurH.